The primary structure comprises 234 residues: Enolase-phosphatase E1 (234 aa).

2 residues coordinate Mg(2+): D10 and E12. Residues 125–126 (SS) and K162 each bind substrate. D188 contributes to the Mg(2+) binding site.

Belongs to the HAD-like hydrolase superfamily. MasA/MtnC family. Monomer. Mg(2+) is required as a cofactor.

The protein localises to the cytoplasm. The protein resides in the nucleus. It carries out the reaction 5-methylsulfanyl-2,3-dioxopentyl phosphate + H2O = 1,2-dihydroxy-5-(methylsulfanyl)pent-1-en-3-one + phosphate. Its pathway is amino-acid biosynthesis; L-methionine biosynthesis via salvage pathway; L-methionine from S-methyl-5-thio-alpha-D-ribose 1-phosphate: step 3/6. It functions in the pathway amino-acid biosynthesis; L-methionine biosynthesis via salvage pathway; L-methionine from S-methyl-5-thio-alpha-D-ribose 1-phosphate: step 4/6. Its function is as follows. Bifunctional enzyme that catalyzes the enolization of 2,3-diketo-5-methylthiopentyl-1-phosphate (DK-MTP-1-P) into the intermediate 2-hydroxy-3-keto-5-methylthiopentenyl-1-phosphate (HK-MTPenyl-1-P), which is then dephosphorylated to form the acireductone 1,2-dihydroxy-3-keto-5-methylthiopentene (DHK-MTPene). The sequence is that of Enolase-phosphatase E1 from Sordaria macrospora (strain ATCC MYA-333 / DSM 997 / K(L3346) / K-hell).